Here is a 248-residue protein sequence, read N- to C-terminus: Deoxyribose-phosphate aldolase (248 aa).

Catalysis depends on Asp-117, which acts as the Proton donor/acceptor. Lys-179 (schiff-base intermediate with acetaldehyde) is an active-site residue. The active-site Proton donor/acceptor is Lys-208.

It belongs to the DeoC/FbaB aldolase family. DeoC type 1 subfamily.

The protein localises to the cytoplasm. It carries out the reaction 2-deoxy-D-ribose 5-phosphate = D-glyceraldehyde 3-phosphate + acetaldehyde. It participates in carbohydrate degradation; 2-deoxy-D-ribose 1-phosphate degradation; D-glyceraldehyde 3-phosphate and acetaldehyde from 2-deoxy-alpha-D-ribose 1-phosphate: step 2/2. Functionally, catalyzes a reversible aldol reaction between acetaldehyde and D-glyceraldehyde 3-phosphate to generate 2-deoxy-D-ribose 5-phosphate. This is Deoxyribose-phosphate aldolase from Thermotoga sp. (strain RQ2).